Reading from the N-terminus, the 414-residue chain is Glutamyl-tRNA reductase (414 aa).

Residues 49–52 (TCNR), Ser-108, 113–115 (EPQ), and Gln-119 contribute to the substrate site. The active-site Nucleophile is Cys-50. 188–193 (GAGQTG) lines the NADP(+) pocket.

This sequence belongs to the glutamyl-tRNA reductase family. Homodimer.

The catalysed reaction is (S)-4-amino-5-oxopentanoate + tRNA(Glu) + NADP(+) = L-glutamyl-tRNA(Glu) + NADPH + H(+). It functions in the pathway porphyrin-containing compound metabolism; protoporphyrin-IX biosynthesis; 5-aminolevulinate from L-glutamyl-tRNA(Glu): step 1/2. Functionally, catalyzes the NADPH-dependent reduction of glutamyl-tRNA(Glu) to glutamate 1-semialdehyde (GSA). The polypeptide is Glutamyl-tRNA reductase (Francisella tularensis subsp. tularensis (strain WY96-3418)).